Here is a 354-residue protein sequence, read N- to C-terminus: Transcription activator of gluconeogenesis ERT1-1 (354 aa).

Positions 1–29 (MSFYPILRGPAKQESPPPPPAPKKRRKTA) are disordered. Positions 32–60 (CLHCQKAHLTCDEGRPCARCIKKNMGDQC) form a DNA-binding region, zn(2)-C6 fungal-type. Disordered stretches follow at residues 71–111 (LVGL…FGSS) and 128–169 (DTSS…QGSP). The segment covering 81 to 98 (QATQQKQQQQQQQQQAVQ) has biased composition (low complexity). The segment covering 159-169 (SQTAGTPQGSP) has biased composition (polar residues).

This sequence belongs to the ERT1/acuK family.

It localises to the nucleus. Transcription factor which regulates nonfermentable carbon utilization. Activator of gluconeogenetic genes. This is Transcription activator of gluconeogenesis ERT1-1 (ERT1-1) from Yarrowia lipolytica (strain CLIB 122 / E 150) (Yeast).